We begin with the raw amino-acid sequence, 258 residues long: Pyridoxine 5'-phosphate synthase (258 aa).

Asn6 serves as a coordination point for 3-amino-2-oxopropyl phosphate. 1-deoxy-D-xylulose 5-phosphate is bound at residue 8-9 (DH). Position 17 (Arg17) interacts with 3-amino-2-oxopropyl phosphate. The active-site Proton acceptor is the His42. Positions 44 and 49 each coordinate 1-deoxy-D-xylulose 5-phosphate. The active-site Proton acceptor is Glu69. Thr99 lines the 1-deoxy-D-xylulose 5-phosphate pocket. The active-site Proton donor is the His213. Residues Gly214 and 235 to 236 (GQ) contribute to the 3-amino-2-oxopropyl phosphate site.

It belongs to the PNP synthase family. Homooctamer; tetramer of dimers.

It localises to the cytoplasm. It carries out the reaction 3-amino-2-oxopropyl phosphate + 1-deoxy-D-xylulose 5-phosphate = pyridoxine 5'-phosphate + phosphate + 2 H2O + H(+). It participates in cofactor biosynthesis; pyridoxine 5'-phosphate biosynthesis; pyridoxine 5'-phosphate from D-erythrose 4-phosphate: step 5/5. Its function is as follows. Catalyzes the complicated ring closure reaction between the two acyclic compounds 1-deoxy-D-xylulose-5-phosphate (DXP) and 3-amino-2-oxopropyl phosphate (1-amino-acetone-3-phosphate or AAP) to form pyridoxine 5'-phosphate (PNP) and inorganic phosphate. This Sulfurovum sp. (strain NBC37-1) protein is Pyridoxine 5'-phosphate synthase.